The primary structure comprises 1774 residues: U3 small nucleolar RNA-associated protein 10 (1774 aa).

The interval 1209-1228 (TEQGKSDGDESGSEPDNDNP) is disordered. One copy of the HEAT repeat lies at 1734–1772 (LVPVIAELLEDDDEEVEQEVRTGLVKVVETVLGEPFDRY).

The protein belongs to the HEATR1/UTP10 family. As to quaternary structure, component of the ribosomal small subunit (SSU) processome.

Its subcellular location is the nucleus. It is found in the nucleolus. Involved in nucleolar processing of pre-18S ribosomal RNA. Involved in ribosome biosynthesis. The chain is U3 small nucleolar RNA-associated protein 10 from Eremothecium gossypii (strain ATCC 10895 / CBS 109.51 / FGSC 9923 / NRRL Y-1056) (Yeast).